Reading from the N-terminus, the 198-residue chain is Na(+)-translocating NADH-quinone reductase subunit E (198 aa).

6 helical membrane-spanning segments follow: residues 11-31, 39-59, 77-97, 110-130, 140-160, and 176-196; these read SIFI…FLAV, FGLG…NNLV, FLNF…LEMI, GIFL…SFMV, VVYG…LAGI, and LGIT…FSGV.

This sequence belongs to the NqrDE/RnfAE family. Composed of six subunits; NqrA, NqrB, NqrC, NqrD, NqrE and NqrF.

The protein localises to the cell inner membrane. The catalysed reaction is a ubiquinone + n Na(+)(in) + NADH + H(+) = a ubiquinol + n Na(+)(out) + NAD(+). In terms of biological role, NQR complex catalyzes the reduction of ubiquinone-1 to ubiquinol by two successive reactions, coupled with the transport of Na(+) ions from the cytoplasm to the periplasm. NqrA to NqrE are probably involved in the second step, the conversion of ubisemiquinone to ubiquinol. In Vibrio vulnificus (strain CMCP6), this protein is Na(+)-translocating NADH-quinone reductase subunit E.